A 63-amino-acid chain; its full sequence is Large ribosomal subunit protein bL35 (63 aa).

Belongs to the bacterial ribosomal protein bL35 family.

The protein is Large ribosomal subunit protein bL35 of Campylobacter hominis (strain ATCC BAA-381 / DSM 21671 / CCUG 45161 / LMG 19568 / NCTC 13146 / CH001A).